Reading from the N-terminus, the 353-residue chain is Photosystem II D2 protein (353 aa).

Residue T2 is modified to N-acetylthreonine. T2 bears the Phosphothreonine mark. Residues 41-61 traverse the membrane as a helical segment; it reads CAYFALGGWFTGTTFVTSWYT. H118 is a binding site for chlorophyll a. A helical transmembrane segment spans residues 125–141; that stretch reads GFMLRQFELARSVQLRP. Pheophytin a is bound by residues Q130 and N143. Residues 153–166 form a helical membrane-spanning segment; the sequence is VFVSVFLIYPLGQS. H198 contributes to the chlorophyll a binding site. Residues 208–228 form a helical membrane-spanning segment; the sequence is AALLCAIHGATVENTLFEDGD. A plastoquinone contacts are provided by H215 and F262. H215 lines the Fe cation pocket. Position 269 (H269) interacts with Fe cation. The helical transmembrane segment at 279–295 threads the bilayer; the sequence is GLWMSALGVVGLALNLR.

The protein belongs to the reaction center PufL/M/PsbA/D family. In terms of assembly, PSII is composed of 1 copy each of membrane proteins PsbA, PsbB, PsbC, PsbD, PsbE, PsbF, PsbH, PsbI, PsbJ, PsbK, PsbL, PsbM, PsbT, PsbX, PsbY, PsbZ, Psb30/Ycf12, at least 3 peripheral proteins of the oxygen-evolving complex and a large number of cofactors. It forms dimeric complexes. It depends on The D1/D2 heterodimer binds P680, chlorophylls that are the primary electron donor of PSII, and subsequent electron acceptors. It shares a non-heme iron and each subunit binds pheophytin, quinone, additional chlorophylls, carotenoids and lipids. There is also a Cl(-1) ion associated with D1 and D2, which is required for oxygen evolution. The PSII complex binds additional chlorophylls, carotenoids and specific lipids. as a cofactor.

The protein resides in the plastid. Its subcellular location is the chloroplast thylakoid membrane. It carries out the reaction 2 a plastoquinone + 4 hnu + 2 H2O = 2 a plastoquinol + O2. Functionally, photosystem II (PSII) is a light-driven water:plastoquinone oxidoreductase that uses light energy to abstract electrons from H(2)O, generating O(2) and a proton gradient subsequently used for ATP formation. It consists of a core antenna complex that captures photons, and an electron transfer chain that converts photonic excitation into a charge separation. The D1/D2 (PsbA/PsbD) reaction center heterodimer binds P680, the primary electron donor of PSII as well as several subsequent electron acceptors. D2 is needed for assembly of a stable PSII complex. This Barbarea verna (Land cress) protein is Photosystem II D2 protein.